A 36-amino-acid chain; its full sequence is Serine protease inhibitor 2 (36 aa).

The 36-residue stretch at 1-36 (EISCEPGTTFQDKCNTCRCGKDGKSAAGCTLKACPQ) folds into the Pacifastin domain. 3 disulfide bridges follow: cysteine 4–cysteine 19, cysteine 14–cysteine 34, and cysteine 17–cysteine 29.

Belongs to the protease inhibitor I19 family. Expressed in hemolymph.

It is found in the secreted. Functionally, probable serine protease inhibitor. The sequence is that of Serine protease inhibitor 2 from Melanoplus sanguinipes (Migratory grasshopper).